Here is a 209-residue protein sequence, read N- to C-terminus: Methylated-DNA--protein-cysteine methyltransferase (209 aa).

Residue cysteine 5 coordinates Zn(2+). Serine 14 is modified (phosphoserine). Positions 24, 29, and 89 each coordinate Zn(2+). Residues threonine 99, tyrosine 118, glutamine 119, asparagine 127, and arginine 132 each coordinate DNA. The active-site Nucleophile; methyl group acceptor is the cysteine 149. Serine 155 is a binding site for DNA.

It belongs to the MGMT family. Zn(2+) is required as a cofactor.

It is found in the nucleus. It catalyses the reaction a 6-O-methyl-2'-deoxyguanosine in DNA + L-cysteinyl-[protein] = S-methyl-L-cysteinyl-[protein] + a 2'-deoxyguanosine in DNA. The catalysed reaction is a 4-O-methyl-thymidine in DNA + L-cysteinyl-[protein] = a thymidine in DNA + S-methyl-L-cysteinyl-[protein]. Functionally, involved in the cellular defense against the biological effects of O6-methylguanine (O6-MeG) and O4-methylthymine (O4-MeT) in DNA. Repairs the methylated nucleobase in DNA by stoichiometrically transferring the methyl group to a cysteine residue in the enzyme. This is a suicide reaction: the enzyme is irreversibly inactivated. The protein is Methylated-DNA--protein-cysteine methyltransferase (Mgmt) of Rattus norvegicus (Rat).